We begin with the raw amino-acid sequence, 442 residues long: Serum response factor-binding protein 1 (442 aa).

Coiled coils occupy residues Glu55 to Glu77 and Leu118 to Ala140. Disordered regions lie at residues Arg137–His336 and Phe358–Asp442. Composition is skewed to basic and acidic residues over residues Ala149–Pro159 and Glu167–Thr188. Residue Lys202 forms a Glycyl lysine isopeptide (Lys-Gly) (interchain with G-Cter in SUMO2) linkage. Ser215 is subject to Phosphoserine. The segment covering Gly237 to Arg247 has biased composition (polar residues). A compositionally biased stretch (acidic residues) spans Val266–Thr278. 3 positions are modified to phosphoserine: Ser277, Ser292, and Ser294. Lys329 participates in a covalent cross-link: Glycyl lysine isopeptide (Lys-Gly) (interchain with G-Cter in SUMO2). At Ser362 the chain carries Phosphoserine. Over residues Ser367–Asp382 the composition is skewed to basic and acidic residues.

As to quaternary structure, interacts with SRF. Forms complexes with SRF and SRF cofactors ARID2, MYOCD and NKX2-5. Interacts with the N-terminus of SLC2A4.

It is found in the cytoplasm. The protein resides in the perinuclear region. Its function is as follows. May be involved in regulating transcriptional activation of cardiac genes during the aging process. May play a role in biosynthesis and/or processing of SLC2A4 in adipose cells. The protein is Serum response factor-binding protein 1 of Rattus norvegicus (Rat).